A 920-amino-acid polypeptide reads, in one-letter code: MSDERITEKPPHQQPESEGEPVPEEEVEEETEEEVPDEQSSEDDDIDGLIDELQSQEAHEEAEEDDGPAAAGEARKIPEELLQTDPSVGLSSDEVVNRRKKYGLNQMREESENLLVKFLMFFIGPIQFVMEAAAVLAAGLEDWVDFGVICGLLFLNAGVGFIQEFQAGSIVEELKKTLANTATVIRDGSVQEAPANEIVPGDILKLEDGTVIPADGRLVTEECFLQVDQSSITGESLAVDKHYGDEVFSSSTVKRGEGFMIVTATGDNTFVGRAASLVNAAAGGQGHFTEVLNGIGVILLVLVVITLLLIWTACFYRTVRIVPILRYTLGITIVGVPVGLPAVVTTTMAGGAAYLAKKQAIVQKLSAIESLAGVEILCSDKTGTLTKNKLSLHEPYTVEGVSSDDLMLTACLAASRKKKGLDAIDKAFLKSLAQYPKAKGALTKYKVLEFHPFDPVSKKVTAVVESPEGERIICVKGAPLFVLKTVEEDHPIPEDVHENYENKVAELASRGFRALGVARKRGEGHWEILGVMPCMDPPRDDTAATVNEAKRLGLSVKMLTGDAVGIAKETCRQLGLGTNIYDAERLGLGGGGSMPGSEMYDFVENADGFAEVFPQHKFAVVDILQQRGYLVAMTGDGVNDAPSLKKADTGIAVEGATDAARSAADIVFLAPGLSAIIDALKTSRQIFHRMYAYVVYRIALSLHLEIFLGLWIAILNHSLDIDLIVFIAIFADVATLAIAYDNAPFSPSPVKWNLPRLWGMSIMMGIILAAGTWITLTTMFLPKGGIIQNFGSIDGILFLEISLTENWLIFITRAVGPFWSSIPSWQLAGAVFVVDVVATMFTLFGWWSQNWTDIVTVVRIYIWSIGIFCCLGGAYYLMSESETFDRLMNGKPLKENKSTRSVEDFLASMRRVSTQHEKGN.

Basic and acidic residues predominate over residues 1 to 11 (MSDERITEKPP). The segment at 1-71 (MSDERITEKP…AEEDDGPAAA (71 aa)) is disordered. Residues 1-117 (MSDERITEKP…REESENLLVK (117 aa)) are Cytoplasmic-facing. Residues 17–50 (SEGEPVPEEEVEEETEEEVPDEQSSEDDDIDGLI) show a composition bias toward acidic residues. The helical transmembrane segment at 118 to 138 (FLMFFIGPIQFVMEAAAVLAA) threads the bilayer. Topologically, residues 139 to 142 (GLED) are extracellular. A helical transmembrane segment spans residues 143–162 (WVDFGVICGLLFLNAGVGFI). Residues 163–293 (QEFQAGSIVE…GQGHFTEVLN (131 aa)) lie on the Cytoplasmic side of the membrane. The chain crosses the membrane as a helical span at residues 294 to 315 (GIGVILLVLVVITLLLIWTACF). Over 316-326 (YRTVRIVPILR) the chain is Extracellular. Residues 327–349 (YTLGITIVGVPVGLPAVVTTTMA) form a helical membrane-spanning segment. Residues 350–721 (GGAAYLAKKQ…IAILNHSLDI (372 aa)) are Cytoplasmic-facing. Asp380 (4-aspartylphosphate intermediate) is an active-site residue. Asp636 and Asp640 together coordinate Mg(2+). The chain crosses the membrane as a helical span at residues 722–740 (DLIVFIAIFADVATLAIAY). At 741 to 756 (DNAPFSPSPVKWNLPR) the chain is on the extracellular side. The helical transmembrane segment at 757–776 (LWGMSIMMGIILAAGTWITL) threads the bilayer. Residues 777–826 (TTMFLPKGGIIQNFGSIDGILFLEISLTENWLIFITRAVGPFWSSIPSWQ) lie on the Cytoplasmic side of the membrane. The helical transmembrane segment at 827-847 (LAGAVFVVDVVATMFTLFGWW) threads the bilayer. Over 848–859 (SQNWTDIVTVVR) the chain is Extracellular. The helical transmembrane segment at 860-876 (IYIWSIGIFCCLGGAYY) threads the bilayer. At 877–920 (LMSESETFDRLMNGKPLKENKSTRSVEDFLASMRRVSTQHEKGN) the chain is on the cytoplasmic side.

Belongs to the cation transport ATPase (P-type) (TC 3.A.3) family. Type IIIA subfamily.

It localises to the cell membrane. It catalyses the reaction ATP + H2O + H(+)(in) = ADP + phosphate + 2 H(+)(out). Functionally, the plasma membrane ATPase of plants and fungi is a hydrogen ion pump. The proton gradient it generates drives the active transport of nutrients by H(+)-symport. The resulting external acidification and/or internal alkinization may mediate growth responses. The sequence is that of Plasma membrane ATPase from Zygosaccharomyces rouxii.